A 50-amino-acid chain; its full sequence is Sperm protamine P1 (50 aa).

2 disulfides stabilise this stretch: Cys7–Cys15 and Cys39–Cys47.

It belongs to the protamine P1 family. In terms of assembly, cross-linked by interchain disulfide bonds around the DNA-helix. In terms of tissue distribution, testis.

It is found in the nucleus. Its subcellular location is the chromosome. In terms of biological role, protamines substitute for histones in the chromatin of sperm during the haploid phase of spermatogenesis. They compact sperm DNA into a highly condensed, stable and inactive complex. The protein is Sperm protamine P1 (PRM1) of Sus scrofa (Pig).